A 477-amino-acid chain; its full sequence is Probable ribonuclease FAU-1 (477 aa).

It belongs to the FAU-1 family.

In terms of biological role, probable RNase involved in rRNA stability through maturation and/or degradation of precursor rRNAs. Binds to RNA in loop regions with AU-rich sequences. This is Probable ribonuclease FAU-1 from Staphylothermus marinus (strain ATCC 43588 / DSM 3639 / JCM 9404 / F1).